The chain runs to 116 residues: U30-theraphotoxin-Cg1b (116 aa).

A signal peptide spans 1 to 17 (MKLCVLTIATLLVTATS). The propeptide occupies 18–53 (LETQKEIAEGNELTREETPSLVEHKEDEAAAASEKR). Positions 25-45 (AEGNELTREETPSLVEHKEDE) are disordered. 4 disulfides stabilise this stretch: cysteine 55/cysteine 69, cysteine 62/cysteine 75, cysteine 66/cysteine 112, and cysteine 68/cysteine 88.

Belongs to the neurotoxin 03 (Tx2) family. 02 subfamily. Expressed by the venom gland.

It localises to the secreted. Functionally, probable ion channel inhibitor. This chain is U30-theraphotoxin-Cg1b, found in Chilobrachys guangxiensis (Chinese earth tiger tarantula).